The primary structure comprises 252 residues: 2-succinyl-6-hydroxy-2,4-cyclohexadiene-1-carboxylate synthase (252 aa).

This sequence belongs to the AB hydrolase superfamily. MenH family. As to quaternary structure, monomer.

The enzyme catalyses 5-enolpyruvoyl-6-hydroxy-2-succinyl-cyclohex-3-ene-1-carboxylate = (1R,6R)-6-hydroxy-2-succinyl-cyclohexa-2,4-diene-1-carboxylate + pyruvate. It functions in the pathway quinol/quinone metabolism; 1,4-dihydroxy-2-naphthoate biosynthesis; 1,4-dihydroxy-2-naphthoate from chorismate: step 3/7. It participates in quinol/quinone metabolism; menaquinone biosynthesis. Functionally, catalyzes a proton abstraction reaction that results in 2,5-elimination of pyruvate from 2-succinyl-5-enolpyruvyl-6-hydroxy-3-cyclohexene-1-carboxylate (SEPHCHC) and the formation of 2-succinyl-6-hydroxy-2,4-cyclohexadiene-1-carboxylate (SHCHC). In Escherichia coli O9:H4 (strain HS), this protein is 2-succinyl-6-hydroxy-2,4-cyclohexadiene-1-carboxylate synthase.